The primary structure comprises 334 residues: Ephrin-B1 (334 aa).

Positions 1 to 25 (MARPRGGRWLLGVLLALCRLAAPLA) are cleaved as a signal peptide. The Ephrin RBD domain occupies 26 to 160 (KSLEPVSWSA…TRSMKIVMKV (135 aa)). Topologically, residues 26 to 231 (KSLEPVSWSA…FLSSKVAVFA (206 aa)) are extracellular. Disulfide bonds link Cys-60–Cys-97 and Cys-85–Cys-149. Asn-135 carries an N-linked (GlcNAc...) asparagine glycan. Residues 175-218 (SRPSKEADNTVKIVTQSPRHKVPTVEEPGKPGSVNQNGQETQGP) form a disordered region. Over residues 207–218 (SVNQNGQETQGP) the composition is skewed to polar residues. A helical transmembrane segment spans residues 232–252 (AIGAGCVIFILIIIFLVVLLI). Residues 253–334 (KIRKRHRKHT…QSPANIYYKV (82 aa)) lie on the Cytoplasmic side of the membrane. A PDZ-binding motif is present at residues 332 to 334 (YKV).

This sequence belongs to the ephrin family. As to quaternary structure, binds to the receptor tyrosine kinase EPHB2. Interacts with GRIP1 and GRIP2. In terms of processing, inducible phosphorylation of tyrosine residues in the cytoplasmic domain.

The protein localises to the membrane. Cell surface transmembrane ligand for Eph receptors, a family of receptor tyrosine kinases which are crucial for migration, repulsion and adhesion during neuronal, vascular and epithelial development. Binds promiscuously Eph receptors residing on adjacent cells, leading to contact-dependent bidirectional signaling into neighboring cells. The signaling pathway downstream of the receptor is referred to as forward signaling while the signaling pathway downstream of the ephrin ligand is referred to as reverse signaling. This Gallus gallus (Chicken) protein is Ephrin-B1 (EFNB1).